Consider the following 185-residue polypeptide: MIADVKKSAEQKMQKSLDALKVDFSKVRSGRPHTGLLDHIMVDYYGTPTPIKQLANVTLADARTIGIIPWDKKIFSAIEKAIRDSDLGLNPMTVSDMVRVPMPPLTEERRKDLTKIVKTEAEAARVAMRNIRRDANAHLKELLKDKLIAEDEDRRAQDEIQKLTDRYIAEVDKLLQTKEAELMAV.

It belongs to the RRF family.

It localises to the cytoplasm. In terms of biological role, responsible for the release of ribosomes from messenger RNA at the termination of protein biosynthesis. May increase the efficiency of translation by recycling ribosomes from one round of translation to another. The polypeptide is Ribosome-recycling factor (Nitrosomonas europaea (strain ATCC 19718 / CIP 103999 / KCTC 2705 / NBRC 14298)).